A 354-amino-acid chain; its full sequence is Uroporphyrinogen decarboxylase (354 aa).

Substrate is bound by residues 27 to 31 (RQAGR), Asp-77, Tyr-154, Thr-209, and His-327.

The protein belongs to the uroporphyrinogen decarboxylase family. As to quaternary structure, homodimer.

It localises to the cytoplasm. The catalysed reaction is uroporphyrinogen III + 4 H(+) = coproporphyrinogen III + 4 CO2. It functions in the pathway porphyrin-containing compound metabolism; protoporphyrin-IX biosynthesis; coproporphyrinogen-III from 5-aminolevulinate: step 4/4. Catalyzes the decarboxylation of four acetate groups of uroporphyrinogen-III to yield coproporphyrinogen-III. This Escherichia coli (strain UTI89 / UPEC) protein is Uroporphyrinogen decarboxylase.